Reading from the N-terminus, the 412-residue chain is Serine hydroxymethyltransferase (412 aa).

(6S)-5,6,7,8-tetrahydrofolate is bound by residues leucine 120 and glycine 124–leucine 126. Lysine 229 carries the post-translational modification N6-(pyridoxal phosphate)lysine. (6S)-5,6,7,8-tetrahydrofolate is bound at residue serine 352 to phenylalanine 354.

The protein belongs to the SHMT family. In terms of assembly, homodimer. Pyridoxal 5'-phosphate serves as cofactor.

The protein resides in the cytoplasm. The catalysed reaction is (6R)-5,10-methylene-5,6,7,8-tetrahydrofolate + glycine + H2O = (6S)-5,6,7,8-tetrahydrofolate + L-serine. It participates in one-carbon metabolism; tetrahydrofolate interconversion. The protein operates within amino-acid biosynthesis; glycine biosynthesis; glycine from L-serine: step 1/1. In terms of biological role, catalyzes the reversible interconversion of serine and glycine with tetrahydrofolate (THF) serving as the one-carbon carrier. This reaction serves as the major source of one-carbon groups required for the biosynthesis of purines, thymidylate, methionine, and other important biomolecules. Also exhibits THF-independent aldolase activity toward beta-hydroxyamino acids, producing glycine and aldehydes, via a retro-aldol mechanism. The sequence is that of Serine hydroxymethyltransferase from Acetivibrio thermocellus (strain ATCC 27405 / DSM 1237 / JCM 9322 / NBRC 103400 / NCIMB 10682 / NRRL B-4536 / VPI 7372) (Clostridium thermocellum).